A 203-amino-acid chain; its full sequence is Probable GTP-binding protein EngB (203 aa).

The EngB-type G domain occupies 1–190; that stretch reads MPEIVLVGRS…LEALQERVRK (190 aa). GTP contacts are provided by residues 8 to 15, 35 to 39, 53 to 56, 132 to 135, and 169 to 171; these read GRSNVGKS, GVTRK, DMPG, NKID, and ISA. Positions 15 and 37 each coordinate Mg(2+).

This sequence belongs to the TRAFAC class TrmE-Era-EngA-EngB-Septin-like GTPase superfamily. EngB GTPase family. The cofactor is Mg(2+).

In terms of biological role, necessary for normal cell division and for the maintenance of normal septation. The protein is Probable GTP-binding protein EngB of Methanopyrus kandleri (strain AV19 / DSM 6324 / JCM 9639 / NBRC 100938).